Reading from the N-terminus, the 100-residue chain is Large ribosomal subunit protein bL21 (100 aa).

Belongs to the bacterial ribosomal protein bL21 family. Part of the 50S ribosomal subunit. Contacts protein L20.

This protein binds to 23S rRNA in the presence of protein L20. The polypeptide is Large ribosomal subunit protein bL21 (Wolbachia sp. subsp. Brugia malayi (strain TRS)).